The primary structure comprises 66 residues: MRHLLVLLLICLSVIAMAQATFGGGLGGAVGGRRRRDIGGGLGGAVGGRRRRDIGGGLGGAVGGKS.

The first 20 residues, 1–20 (MRHLLVLLLICLSVIAMAQA), serve as a signal peptide directing secretion. The segment at 21 to 66 (TFGGGLGGAVGGRRRRDIGGGLGGAVGGRRRRDIGGGLGGAVGGKS) is 3 X 16 AA tandem repeats of [FI]-G-G-G-L-G-G-A-V-G-G-R-R-R-R-D. A run of 2 repeats spans residues 22–37 (FGGG…RRRD) and 38–53 (IGGG…RRRD). A Glycine amide modification is found at G31. A propeptide spanning residues 33-37 (RRRRD) is cleaved from the precursor. Residue G47 is modified to Glycine amide. A propeptide spanning residues 49 to 53 (RRRRD) is cleaved from the precursor. One copy of the 3; half-length repeat lies at 54–64 (IGGGLGGAVGG).

Belongs to the limacoditoxin-59 family. In terms of tissue distribution, expressed by the venom secretory cell of the spine. The spine is a cuticular structure containing a single large nucleated venom-secreting cell at its base. It is an independent unit capable of producing, storing and injecting venom. On the back of D.vulnerans caterpillars, spines are grouped together by 50 to 100 to form scoli, of which there are eight in D.vulnerans.

The protein resides in the secreted. Functionally, probable toxin. This chain is U-limacoditoxin(59)-Dv128, found in Doratifera vulnerans (Mottled cup moth).